Consider the following 378-residue polypeptide: Carbamoyl phosphate synthase small chain (378 aa).

The interval methionine 1–lysine 188 is CPSase. Residues serine 50, glycine 240, and glycine 242 each contribute to the L-glutamine site. Positions histidine 192 to glutamine 378 constitute a Glutamine amidotransferase type-1 domain. Cysteine 268 functions as the Nucleophile in the catalytic mechanism. L-glutamine is bound by residues leucine 269, glutamine 272, asparagine 310, glycine 312, and phenylalanine 313. Catalysis depends on residues histidine 352 and glutamate 354.

It belongs to the CarA family. As to quaternary structure, composed of two chains; the small (or glutamine) chain promotes the hydrolysis of glutamine to ammonia, which is used by the large (or ammonia) chain to synthesize carbamoyl phosphate. Tetramer of heterodimers (alpha,beta)4.

It catalyses the reaction hydrogencarbonate + L-glutamine + 2 ATP + H2O = carbamoyl phosphate + L-glutamate + 2 ADP + phosphate + 2 H(+). The enzyme catalyses L-glutamine + H2O = L-glutamate + NH4(+). It functions in the pathway amino-acid biosynthesis; L-arginine biosynthesis; carbamoyl phosphate from bicarbonate: step 1/1. The protein operates within pyrimidine metabolism; UMP biosynthesis via de novo pathway; (S)-dihydroorotate from bicarbonate: step 1/3. Functionally, small subunit of the glutamine-dependent carbamoyl phosphate synthetase (CPSase). CPSase catalyzes the formation of carbamoyl phosphate from the ammonia moiety of glutamine, carbonate, and phosphate donated by ATP, constituting the first step of 2 biosynthetic pathways, one leading to arginine and/or urea and the other to pyrimidine nucleotides. The small subunit (glutamine amidotransferase) binds and cleaves glutamine to supply the large subunit with the substrate ammonia. This is Carbamoyl phosphate synthase small chain from Ralstonia nicotianae (strain ATCC BAA-1114 / GMI1000) (Ralstonia solanacearum).